The chain runs to 70 residues: NADH-ubiquinone oxidoreductase chain 3 (70 aa).

Residues 42–62 (FFVITLIFLIFDVEIYLLLPM) traverse the membrane as a helical segment.

This sequence belongs to the complex I subunit 3 family.

It localises to the mitochondrion membrane. The catalysed reaction is a ubiquinone + NADH + 5 H(+)(in) = a ubiquinol + NAD(+) + 4 H(+)(out). In terms of biological role, core subunit of the mitochondrial membrane respiratory chain NADH dehydrogenase (Complex I) that is believed to belong to the minimal assembly required for catalysis. Complex I functions in the transfer of electrons from NADH to the respiratory chain. The immediate electron acceptor for the enzyme is believed to be ubiquinone. This chain is NADH-ubiquinone oxidoreductase chain 3 (ND3), found in Artemia salina (Brine shrimp).